The primary structure comprises 354 residues: MAQLSQVPYLLRATRGELLDRPPVWMMRQAGRYMKAYRDLREKYPSFRERSENTDIAVEISLQPFHAFKPDGVILFSDILTPLPAIGIDFDIIESKGPIIDPPIRTEAQIDKLHPIEPEESLPFIREILQTLRREVKNEAAVLGFIGAPWTLAAYAIEGKSCKDYTNIKKMAFCQPEMLHKFLGKLAEAIAVYARYQINSGAQVIQMFDSWAGQLSPQDYETFALPYQKLVVQEVKKTHPNTPFILYINGSAGLLERMPQTGVDIVSVDWSVDIAEARQRLGNNICVQGNIDPGVLFGSQEFIKSRILETIRKAGNRGHILNLGHGVLKETPEENVEFFFKTAKEISSLLALTA.

Residues 28–32 (RQAGR), D78, Y155, S210, and H325 each bind substrate.

Belongs to the uroporphyrinogen decarboxylase family. In terms of assembly, homodimer.

It localises to the cytoplasm. The catalysed reaction is uroporphyrinogen III + 4 H(+) = coproporphyrinogen III + 4 CO2. The protein operates within porphyrin-containing compound metabolism; protoporphyrin-IX biosynthesis; coproporphyrinogen-III from 5-aminolevulinate: step 4/4. Catalyzes the decarboxylation of four acetate groups of uroporphyrinogen-III to yield coproporphyrinogen-III. This is Uroporphyrinogen decarboxylase from Trichodesmium erythraeum (strain IMS101).